Here is a 279-residue protein sequence, read N- to C-terminus: Alcohol dehydrogenase-related 31 kDa protein (279 aa).

Residue 11–34 (YVADCGGIALETSKVLMTKNIAKL) coordinates NAD(+). Serine 139 contacts substrate. Tyrosine 152 serves as the catalytic Proton acceptor.

It belongs to the short-chain dehydrogenases/reductases (SDR) family.

This is Alcohol dehydrogenase-related 31 kDa protein (Adhr) from Drosophila madeirensis (Fruit fly).